A 241-amino-acid polypeptide reads, in one-letter code: Putative lipoprotein YvcA (241 aa).

Residues 1-18 (MKKIIFICFSLLLALTGG) form the signal peptide. Cysteine 19 carries the N-palmitoyl cysteine lipid modification. A lipid anchor (S-diacylglycerol cysteine) is attached at cysteine 19. Positions 22 to 48 (NDNDKNSTNDNKTEAVKPKDMDPKDLP) are disordered. The span at 23–46 (DNDKNSTNDNKTEAVKPKDMDPKD) shows a compositional bias: basic and acidic residues.

Its subcellular location is the cell membrane. Required for complex colony architecture. This Bacillus subtilis (strain 168) protein is Putative lipoprotein YvcA (yvcA).